The sequence spans 515 residues: Lysine--tRNA ligase (515 aa).

Residues Glu425 and Glu432 each coordinate Mg(2+).

Belongs to the class-II aminoacyl-tRNA synthetase family. As to quaternary structure, homodimer. Requires Mg(2+) as cofactor.

The protein resides in the cytoplasm. It carries out the reaction tRNA(Lys) + L-lysine + ATP = L-lysyl-tRNA(Lys) + AMP + diphosphate. The protein is Lysine--tRNA ligase of Cupriavidus metallidurans (strain ATCC 43123 / DSM 2839 / NBRC 102507 / CH34) (Ralstonia metallidurans).